The sequence spans 1940 residues: Myosin-3 (1940 aa).

In terms of domain architecture, Myosin N-terminal SH3-like spans 33-82 (DAKTYCFVVDSKEEYVKGKIKSSQDGKVTVETEDSRTLVVKPEDVYAMNP). Residues 86–779 (DKIEDMAMLT…LLGTLEEMRD (694 aa)) form the Myosin motor domain. The residue at position 130 (K130) is an N6,N6,N6-trimethyllysine. 179–186 (GESGAGKT) is a binding site for ATP. Actin-binding stretches follow at residues 656–678 (LNKLMSNLRTTHPHFVRCIIPNE) and 758–772 (KFGHTKVFFKAGLLG). Residues 782 to 811 (LAKLITRTQAVCRGFLMRVEFQKMMQRRES) form the IQ domain. Residues 841–1928 (LKSAETEKEM…NKLRAKTRDF (1088 aa)) adopt a coiled-coil conformation. Residues 1260-1289 (ARGKNEEMQRSLSELTTQKSRLQTEAGELS) form a disordered region. A compositionally biased stretch (polar residues) spans 1269-1282 (RSLSELTTQKSRLQ).

The protein belongs to the TRAFAC class myosin-kinesin ATPase superfamily. Myosin family. As to quaternary structure, muscle myosin is a hexameric protein that consists of 2 heavy chain subunits (MHC), 2 alkali light chain subunits (MLC) and 2 regulatory light chain subunits (MLC-2).

It localises to the cytoplasm. It is found in the myofibril. In terms of biological role, muscle contraction. This chain is Myosin-3 (Myh3), found in Mus musculus (Mouse).